The chain runs to 113 residues: UPF0102 protein Mfla_2283 (113 aa).

Belongs to the UPF0102 family.

The protein is UPF0102 protein Mfla_2283 of Methylobacillus flagellatus (strain ATCC 51484 / DSM 6875 / VKM B-1610 / KT).